The sequence spans 211 residues: Nucleoside triphosphate pyrophosphatase (211 aa).

The active-site Proton acceptor is the aspartate 78.

The protein belongs to the Maf family. A divalent metal cation is required as a cofactor.

It localises to the cytoplasm. It catalyses the reaction a ribonucleoside 5'-triphosphate + H2O = a ribonucleoside 5'-phosphate + diphosphate + H(+). The catalysed reaction is a 2'-deoxyribonucleoside 5'-triphosphate + H2O = a 2'-deoxyribonucleoside 5'-phosphate + diphosphate + H(+). Nucleoside triphosphate pyrophosphatase. May have a dual role in cell division arrest and in preventing the incorporation of modified nucleotides into cellular nucleic acids. The protein is Nucleoside triphosphate pyrophosphatase of Mycolicibacterium smegmatis (strain ATCC 700084 / mc(2)155) (Mycobacterium smegmatis).